Consider the following 217-residue polypeptide: Growth hormone variant (217 aa).

The N-terminal stretch at M1–A26 is a signal peptide. 2 disulfide bridges follow: C79/C191 and C208/C215. Phosphoserine is present on S132. N166 carries N-linked (GlcNAc...) asparagine glycosylation. A Phosphoserine modification is found at S176.

This sequence belongs to the somatotropin/prolactin family. As to quaternary structure, monomer, dimer, trimer, tetramer and pentamer, disulfide-linked or non-covalently associated, in homomeric and heteromeric combinations. Can also form a complex either with GHBP or with the alpha2-macroglobulin complex. Expressed in the placenta.

It is found in the secreted. In terms of biological role, plays an important role in growth control. Its major role in stimulating body growth is to stimulate the liver and other tissues to secrete IGF1. It stimulates both the differentiation and proliferation of myoblasts. It also stimulates amino acid uptake and protein synthesis in muscle and other tissues. The protein is Growth hormone variant (GH2) of Homo sapiens (Human).